A 213-amino-acid polypeptide reads, in one-letter code: LexA repressor (213 aa).

Positions 31 to 51 form a DNA-binding region, H-T-H motif; that stretch reads RAEISRELGFRSPNAAEEYLK. Active-site for autocatalytic cleavage activity residues include S129 and K166.

This sequence belongs to the peptidase S24 family. As to quaternary structure, homodimer.

The enzyme catalyses Hydrolysis of Ala-|-Gly bond in repressor LexA.. Its function is as follows. Represses a number of genes involved in the response to DNA damage (SOS response), including recA and lexA. In the presence of single-stranded DNA, RecA interacts with LexA causing an autocatalytic cleavage which disrupts the DNA-binding part of LexA, leading to derepression of the SOS regulon and eventually DNA repair. The sequence is that of LexA repressor from Mannheimia succiniciproducens (strain KCTC 0769BP / MBEL55E).